A 359-amino-acid chain; its full sequence is Peptide chain release factor 1 (359 aa).

An N5-methylglutamine modification is found at Gln-236.

This sequence belongs to the prokaryotic/mitochondrial release factor family. Methylated by PrmC. Methylation increases the termination efficiency of RF1.

Its subcellular location is the cytoplasm. In terms of biological role, peptide chain release factor 1 directs the termination of translation in response to the peptide chain termination codons UAG and UAA. The protein is Peptide chain release factor 1 of Streptococcus pneumoniae (strain Hungary19A-6).